We begin with the raw amino-acid sequence, 384 residues long: Alpha-2B adrenergic receptor (384 aa).

Residues 1–25 (AIAAVITFLILFTIFGNALVILAVL) traverse the membrane as a helical segment. The Cytoplasmic portion of the chain corresponds to 26–36 (TSRSLRAPQNL). The chain crosses the membrane as a helical span at residues 37 to 62 (FLVSLAAADILVATLIIPFSLANELL). Residues 63-72 (GYWYFRRTWC) lie on the Extracellular side of the membrane. A disulfide bond links Cys72 and Cys151. The chain crosses the membrane as a helical span at residues 73–95 (EVYLALDVLFCTSSIVHLCAISL). Topologically, residues 96-117 (DRYWAVSRALQYNSKRTPRRIK) are cytoplasmic. Residues 118–140 (CVILTVWLIAAAISLPPLIYKGD) form a helical membrane-spanning segment. At 141–156 (QGPQPRGRPQCKLNQE) the chain is on the extracellular side. Residues 157–180 (AWYILSSSIGSFFAPCLIMILVYL) form a helical membrane-spanning segment. Topologically, residues 181–348 (RIYLIAKRSN…LTREKRFTFV (168 aa)) are cytoplasmic. The interval 192-289 (RGPRAKGAPR…PEEEEECGSP (98 aa)) is disordered. Positions 218–229 (LANSPTLASSLA) are enriched in polar residues. Positions 240 to 249 (PPGEKERETP) are enriched in basic and acidic residues. A helical transmembrane segment spans residues 349-372 (LAVVIGVFVLCWFPFFFSYSLGAI). Residues 373-381 (CPQHCKVPH) lie on the Extracellular side of the membrane. Residues 382–384 (GLF) traverse the membrane as a helical segment.

Belongs to the G-protein coupled receptor 1 family. Adrenergic receptor subfamily. ADRA2B sub-subfamily. Interacts with RAB26. Interacts with PPP1R9B. Interacts with GGA1, GGA2 and GGA3.

It is found in the cell membrane. In terms of biological role, alpha-2 adrenergic receptors mediate the catecholamine-induced inhibition of adenylate cyclase through the action of G proteins. The protein is Alpha-2B adrenergic receptor (ADRA2B) of Elephas maximus (Indian elephant).